The following is a 373-amino-acid chain: Queuine tRNA-ribosyltransferase (373 aa).

The Proton acceptor role is filled by Asp-94. Substrate is bound by residues 94–98 (DSGGF), Asp-148, Gln-191, and Gly-218. Residues 249 to 255 (GVGTPDY) are RNA binding. Catalysis depends on Asp-268, which acts as the Nucleophile. The RNA binding; important for wobble base 34 recognition stretch occupies residues 273-277 (TRIGR). Residues Cys-306, Cys-308, Cys-311, and His-337 each contribute to the Zn(2+) site.

The protein belongs to the queuine tRNA-ribosyltransferase family. Homodimer. Within each dimer, one monomer is responsible for RNA recognition and catalysis, while the other monomer binds to the replacement base PreQ1. The cofactor is Zn(2+).

It carries out the reaction 7-aminomethyl-7-carbaguanine + guanosine(34) in tRNA = 7-aminomethyl-7-carbaguanosine(34) in tRNA + guanine. It functions in the pathway tRNA modification; tRNA-queuosine biosynthesis. Its function is as follows. Catalyzes the base-exchange of a guanine (G) residue with the queuine precursor 7-aminomethyl-7-deazaguanine (PreQ1) at position 34 (anticodon wobble position) in tRNAs with GU(N) anticodons (tRNA-Asp, -Asn, -His and -Tyr). Catalysis occurs through a double-displacement mechanism. The nucleophile active site attacks the C1' of nucleotide 34 to detach the guanine base from the RNA, forming a covalent enzyme-RNA intermediate. The proton acceptor active site deprotonates the incoming PreQ1, allowing a nucleophilic attack on the C1' of the ribose to form the product. After dissociation, two additional enzymatic reactions on the tRNA convert PreQ1 to queuine (Q), resulting in the hypermodified nucleoside queuosine (7-(((4,5-cis-dihydroxy-2-cyclopenten-1-yl)amino)methyl)-7-deazaguanosine). This is Queuine tRNA-ribosyltransferase from Ruminiclostridium cellulolyticum (strain ATCC 35319 / DSM 5812 / JCM 6584 / H10) (Clostridium cellulolyticum).